We begin with the raw amino-acid sequence, 63 residues long: Hypoxia-inducible lipid droplet-associated protein (63 aa).

The interval 1–37 (MKHVLNLYLLGVVLTLLSIFVRVMESLEGLLESPSPG) is required for targeting to lipid droplets. The chain crosses the membrane as a helical span at residues 7–23 (LYLLGVVLTLLSIFVRV). The segment at 31–63 (LESPSPGTSWTTRSQLANTEPTKGLPDHPSRSM) is disordered. Over residues 35 to 51 (SPGTSWTTRSQLANTEP) the composition is skewed to polar residues. Ser44 carries the post-translational modification Phosphoserine.

Highly expressed in renal cell carcinoma cells but barely detectable in adjacent normal kidney tissue. Detected in some cervical and endometrial cancers. Expression also detected in fetal kidney with little or no expression observed in normal adult heart, liver, lung, pancreas, prostate or spinal cord (at protein level).

The protein resides in the lipid droplet. Its subcellular location is the secreted. It localises to the membrane. In terms of biological role, increases intracellular lipid accumulation. Stimulates expression of cytokines including IL6, MIF and VEGFA. Enhances cell growth and proliferation. In Homo sapiens (Human), this protein is Hypoxia-inducible lipid droplet-associated protein (HILPDA).